We begin with the raw amino-acid sequence, 408 residues long: Biphenyl dioxygenase system ferredoxin--NAD(+) reductase component (408 aa).

4-35 (TIAIIGAGLAGSTAARALRAQGYEGRIHLLGD) contributes to the FAD binding site. 145–173 (SLVIVGGGLIGCEVATTARKLSVHVTILE) contributes to the NAD(+) binding site.

This sequence belongs to the bacterial ring-hydroxylating dioxygenase ferredoxin reductase family. As to quaternary structure, this dioxygenase system consists of four proteins: the two subunits of the hydroxylase component (BphA and BphE), a ferredoxin (BphF) and a ferredoxin reductase (BphG). The cofactor is FAD.

The catalysed reaction is 2 reduced [2Fe-2S]-[ferredoxin] + NAD(+) + H(+) = 2 oxidized [2Fe-2S]-[ferredoxin] + NADH. Its pathway is xenobiotic degradation; biphenyl degradation. Part of the electron transfer component of biphenyl dioxygenase, transfers electrons from ferredoxin (BphF) to NADH. The polypeptide is Biphenyl dioxygenase system ferredoxin--NAD(+) reductase component (bphG) (Paraburkholderia xenovorans (strain LB400)).